Reading from the N-terminus, the 198-residue chain is Ribonuclease HII (198 aa).

Residues 10-198 (HLVAGVDEVG…PVKRALGLVS (189 aa)) form the RNase H type-2 domain. The a divalent metal cation site is built by Asp16, Glu17, and Asp108.

This sequence belongs to the RNase HII family. Mn(2+) is required as a cofactor. Requires Mg(2+) as cofactor.

It localises to the cytoplasm. It carries out the reaction Endonucleolytic cleavage to 5'-phosphomonoester.. Functionally, endonuclease that specifically degrades the RNA of RNA-DNA hybrids. The chain is Ribonuclease HII from Salmonella paratyphi A (strain AKU_12601).